We begin with the raw amino-acid sequence, 86 residues long: MAKNKDDIKYATAQAKLSEDEAIRVSYKHGTPLEGGKIAESEPVELFSSAQRIEKGKEQSAASGDQTQIQRDIKDIKGTRTDDSPR.

The segment at R52 to R86 is disordered. Residues S60 to Q70 are compositionally biased toward polar residues. Positions R71–R86 are enriched in basic and acidic residues.

This sequence belongs to the LEA type 3 family.

Its function is as follows. Protein chaperone involved in seed maturation and dormancy maintenance after high temperature fluctuation (e.g. secondary dormancy after 3 days at 40 degrees Celsius), probably by protecting heat labile proteins required for secondary dormancy (e.g. G6PDH, HOP3, SR45, ECP63, SCL33, RPL32B, ChlADR1, MSBP1, MBF1B, At3g01690, At1g15280, At1g15290, At2g31410, At1g11630, At1g65090, EMB2279, EMB1674 and RPL35C). This Arabidopsis thaliana (Mouse-ear cress) protein is SEED MATURATION PROTEIN 1.